Reading from the N-terminus, the 80-residue chain is Dermaseptin-A5 (80 aa).

A signal peptide spans 1–22; that stretch reads MAFLKKSLFLVLFLGLVSLSIC. A propeptide spanning residues 23–43 is cleaved from the precursor; that stretch reads EEEKRENEDEEEQEDDEQSEM. Residues 24–45 form a disordered region; sequence EEKRENEDEEEQEDDEQSEMKR. Positions 30-40 are enriched in acidic residues; it reads EDEEEQEDDEQ. At valine 77 the chain carries Valine amide. Residues 79-80 constitute a propeptide that is removed on maturation; the sequence is EQ.

This sequence belongs to the frog skin active peptide (FSAP) family. Dermaseptin subfamily. In terms of tissue distribution, expressed by the skin glands.

The protein resides in the secreted. Its function is as follows. Possesses a potent antimicrobial activity against Gram-positive and Gram-negative bacteria. Probably acts by disturbing membrane functions with its amphipathic structure. The polypeptide is Dermaseptin-A5 (Agalychnis annae (Blue-sided leaf frog)).